We begin with the raw amino-acid sequence, 306 residues long: Bifunctional protein FolD (306 aa).

NADP(+)-binding positions include 169-171, Ser194, and Ile235; that span reads GRS.

It belongs to the tetrahydrofolate dehydrogenase/cyclohydrolase family. As to quaternary structure, homodimer.

The catalysed reaction is (6R)-5,10-methylene-5,6,7,8-tetrahydrofolate + NADP(+) = (6R)-5,10-methenyltetrahydrofolate + NADPH. It carries out the reaction (6R)-5,10-methenyltetrahydrofolate + H2O = (6R)-10-formyltetrahydrofolate + H(+). Its pathway is one-carbon metabolism; tetrahydrofolate interconversion. Catalyzes the oxidation of 5,10-methylenetetrahydrofolate to 5,10-methenyltetrahydrofolate and then the hydrolysis of 5,10-methenyltetrahydrofolate to 10-formyltetrahydrofolate. The protein is Bifunctional protein FolD of Thermosynechococcus vestitus (strain NIES-2133 / IAM M-273 / BP-1).